Here is a 140-residue protein sequence, read N- to C-terminus: 3-hydroxyacyl-[acyl-carrier-protein] dehydratase FabZ (140 aa).

Histidine 47 is a catalytic residue.

The protein belongs to the thioester dehydratase family. FabZ subfamily.

The protein resides in the cytoplasm. It carries out the reaction a (3R)-hydroxyacyl-[ACP] = a (2E)-enoyl-[ACP] + H2O. Involved in unsaturated fatty acids biosynthesis. Catalyzes the dehydration of short chain beta-hydroxyacyl-ACPs and long chain saturated and unsaturated beta-hydroxyacyl-ACPs. The polypeptide is 3-hydroxyacyl-[acyl-carrier-protein] dehydratase FabZ (Streptococcus gordonii (strain Challis / ATCC 35105 / BCRC 15272 / CH1 / DL1 / V288)).